The following is a 436-amino-acid chain: Gamma-glutamyl phosphate reductase (436 aa).

It belongs to the gamma-glutamyl phosphate reductase family.

It localises to the cytoplasm. It catalyses the reaction L-glutamate 5-semialdehyde + phosphate + NADP(+) = L-glutamyl 5-phosphate + NADPH + H(+). It participates in amino-acid biosynthesis; L-proline biosynthesis; L-glutamate 5-semialdehyde from L-glutamate: step 2/2. Catalyzes the NADPH-dependent reduction of L-glutamate 5-phosphate into L-glutamate 5-semialdehyde and phosphate. The product spontaneously undergoes cyclization to form 1-pyrroline-5-carboxylate. In Prochlorococcus marinus (strain MIT 9215), this protein is Gamma-glutamyl phosphate reductase.